A 954-amino-acid chain; its full sequence is MSDYKDTLNLPETGFPMRGNLAQREPVMLKRWDDEDLYGEIRKAKKGNKSFILHDGPPYANGDIHIGHALNKILKDIIIKSKTLSGFDAPYIPGWDCHGLPIELMVEKKWGKPGRKLTAAEFRQKCREYAAGQVEGQKESFIRLGVLGQWDKPYRTMDFATEANIIRSLGKVAENDHLLKGFKPVHWCTDCGSALAEAEVEYQDKVSPSIDVKFKAVDEAGVVAKFNCAEGHEGQGDVSVVIWTTTPWTMPANRAVAVRDDLEYVLVQVEADAANDKAAYRLIVAAELAKDVMDRAGIEHFHNLGFCKGADLELMRFNHPFYSFDVPIVLGDHVTTESGTGCVHTAPGHGQEDFVVGQKYGLEIANPVGSNGVYLPDTELFAGQHVFKANDVVVETLKEHGALLHHHAYEHSYPHCWRHKTPIIFRATPQWFISMDKAGLRAKALGEIKNVQWLPEWGQSRIEGMVEGRPEWCISRQRTWGVPIALFVHKETQELHPDTRVLIEKVAQLVEQKGIQAWWDLNPAELMGEADAANYEKVLDTLDVWFDSGVTHFSVVDSREEYNGHSADLYLEGSDQHRGWFQSSLVSSVAMKGKAPYNQVLTHGFVVDGQGRKMSKSVGNVVAPKDVTNKLGADILRLWVASTDYTGEVAVSDEILKRSADAYRRIRNTARFFLANLNGFNPETDLVAPEEMVALDRWAVGRAMEAQEEIIKAYDGYNLHGVTQRLMQFCSVEMGSFYLDVIKDRQYTAKQGGHAQRSCQTALFYIVEALVRWMAPIMSFTADEIWNEMPASQGNGEQRDKFVFTGEWFEGLFGLADDEVMNDEFWAEIQQVRGAVNKLLELARKDKVIGGSLQAEITLHANETLAAKLNTLEDELRFVLLTSKAAVAITDSMPEGAQKTDVEGLFVTVNASEAAKCDRCWHHVADVGTIEGHEEVCGRCVTNISGEGEERKFA.

Positions 58-68 match the 'HIGH' region motif; the sequence is PYANGDIHIGH. Glu572 serves as a coordination point for L-isoleucyl-5'-AMP. The 'KMSKS' region motif lies at 613-617; it reads KMSKS. Lys616 is a binding site for ATP. 4 residues coordinate Zn(2+): Cys917, Cys920, Cys937, and Cys940.

It belongs to the class-I aminoacyl-tRNA synthetase family. IleS type 1 subfamily. As to quaternary structure, monomer. Requires Zn(2+) as cofactor.

Its subcellular location is the cytoplasm. The catalysed reaction is tRNA(Ile) + L-isoleucine + ATP = L-isoleucyl-tRNA(Ile) + AMP + diphosphate. Catalyzes the attachment of isoleucine to tRNA(Ile). As IleRS can inadvertently accommodate and process structurally similar amino acids such as valine, to avoid such errors it has two additional distinct tRNA(Ile)-dependent editing activities. One activity is designated as 'pretransfer' editing and involves the hydrolysis of activated Val-AMP. The other activity is designated 'posttransfer' editing and involves deacylation of mischarged Val-tRNA(Ile). This Photobacterium profundum (strain SS9) protein is Isoleucine--tRNA ligase.